The following is a 563-amino-acid chain: Inclusion membrane protein M (563 aa).

Residues 1-36 (MVYFRAHQPRHTPKTFPLEVHHSFSDKHPQIAKAMR) are Cytoplasmic-facing. A helical membrane pass occupies residues 37 to 57 (ITGIALAALSLLAVVACVIAV). Serine 58 is a topological domain (vacuolar). A helical transmembrane segment spans residues 59-79 (AGGAAIPLAVISGIAVMSGLL). Over 80–252 (SAATIICSAK…VLKVALSLGV (173 aa)) the chain is Cytoplasmic. A helical membrane pass occupies residues 253–273 (LAGVAALIIFLPPSLPFIAVI). Residue glycine 274 is a topological domain, vacuolar. Residues 275–295 (VSSLALGMASFLMIRGIKYLL) form a helical membrane-spanning segment. Residues 296–563 (EHSPLNRKQL…QLAQYLLDNH (268 aa)) lie on the Cytoplasmic side of the membrane.

Belongs to the chlamydial CPn_0065/CT_288/TC_0561 family. As to quaternary structure, interacts with host CCDC146. In host cells infected with C.trachomatis incM, CCDC146 is recruited to the periphery of the pathogen-containing vacuole but recruitment is not dependent on incM.

The protein resides in the host vacuole. The protein localises to the host pathogen-containing vacuole. It is found in the host pathogen-containing vacuole membrane. Its subcellular location is the host pathogen-containing vacuole lumen. It localises to the secreted. Its function is as follows. Interferes with host cell cytokinesis, centrosome positioning and Golgi distribution, and contributes to the morphology and stability of the pathogen-containing vacuole. May exert its effects by acting directly or indirectly on host microtubules. The polypeptide is Inclusion membrane protein M (Chlamydia trachomatis serovar D (strain ATCC VR-885 / DSM 19411 / UW-3/Cx)).